Reading from the N-terminus, the 437-residue chain is Trypacidin cluster transcriptional coactivator tpcD (437 aa).

The region spanning 75-144 (LAVQSQLLSC…PQRGHVAHSP (70 aa)) is the HTH iclR-type domain. A DNA-binding region (H-T-H motif) is located at residues 105 to 124 (IADLARLSGVPEAQLARIIR).

As to expression, specifically expressed in conidia.

The protein localises to the nucleus. Transcriptional coactivator; part of the gene cluster that mediates the biosynthesis of trypacidin, a mycotoxin with antiprotozoal activity and that plays a role in the infection process. With tpcE, coregulates the production of trypacidin. This chain is Trypacidin cluster transcriptional coactivator tpcD, found in Aspergillus fumigatus (strain ATCC MYA-4609 / CBS 101355 / FGSC A1100 / Af293) (Neosartorya fumigata).